The following is a 255-amino-acid chain: Pyrroloquinoline-quinone synthase (255 aa).

Belongs to the PqqC family.

The catalysed reaction is 6-(2-amino-2-carboxyethyl)-7,8-dioxo-1,2,3,4,7,8-hexahydroquinoline-2,4-dicarboxylate + 3 O2 = pyrroloquinoline quinone + 2 H2O2 + 2 H2O + H(+). It functions in the pathway cofactor biosynthesis; pyrroloquinoline quinone biosynthesis. Functionally, ring cyclization and eight-electron oxidation of 3a-(2-amino-2-carboxyethyl)-4,5-dioxo-4,5,6,7,8,9-hexahydroquinoline-7,9-dicarboxylic-acid to PQQ. The sequence is that of Pyrroloquinoline-quinone synthase from Cereibacter sphaeroides (strain ATCC 17025 / ATH 2.4.3) (Rhodobacter sphaeroides).